A 459-amino-acid chain; its full sequence is Cobyrinate a,c-diamide synthase (459 aa).

The 198-residue stretch at 249-446 (RIGMAFDEAF…VHTHFASRPG (198 aa)) folds into the GATase cobBQ-type domain. The active-site Nucleophile is Cys332.

This sequence belongs to the CobB/CbiA family. Requires Mg(2+) as cofactor.

It catalyses the reaction cob(II)yrinate + 2 L-glutamine + 2 ATP + 2 H2O = cob(II)yrinate a,c diamide + 2 L-glutamate + 2 ADP + 2 phosphate + 2 H(+). It functions in the pathway cofactor biosynthesis; adenosylcobalamin biosynthesis; cob(II)yrinate a,c-diamide from sirohydrochlorin (anaerobic route): step 10/10. Functionally, catalyzes the ATP-dependent amidation of the two carboxylate groups at positions a and c of cobyrinate, using either L-glutamine or ammonia as the nitrogen source. The sequence is that of Cobyrinate a,c-diamide synthase from Syntrophotalea carbinolica (strain DSM 2380 / NBRC 103641 / GraBd1) (Pelobacter carbinolicus).